We begin with the raw amino-acid sequence, 681 residues long: Methionine--tRNA ligase (681 aa).

The 'HIGH' region signature appears at 18 to 28 (PYANGSIHLGH). Positions 149, 152, 162, and 165 each coordinate Zn(2+). The short motif at 334–338 (KMSKS) is the 'KMSKS' region element. Position 337 (lysine 337) interacts with ATP. The region spanning 580–681 (DFAKLDLRIV…NGAEPGQRVS (102 aa)) is the tRNA-binding domain.

This sequence belongs to the class-I aminoacyl-tRNA synthetase family. MetG type 1 subfamily. Homodimer. Requires Zn(2+) as cofactor.

It localises to the cytoplasm. The catalysed reaction is tRNA(Met) + L-methionine + ATP = L-methionyl-tRNA(Met) + AMP + diphosphate. Its function is as follows. Is required not only for elongation of protein synthesis but also for the initiation of all mRNA translation through initiator tRNA(fMet) aminoacylation. This is Methionine--tRNA ligase from Chromohalobacter salexigens (strain ATCC BAA-138 / DSM 3043 / CIP 106854 / NCIMB 13768 / 1H11).